The primary structure comprises 358 residues: Acyl-CoA Delta-12 desaturase (358 aa).

2 consecutive transmembrane segments (helical) span residues 30-50 and 55-75; these read IILYIIMHLTGFYGLYLAMFY and TVFYSWFLLVIALQGVTAGSH. His-75, His-80, His-112, His-115, and His-116 together coordinate Fe cation. Positions 75-80 match the Histidine box-1 motif; sequence HRLWAH. The Histidine box-2 signature appears at 112–116; that stretch reads HRVHH. The next 2 membrane-spanning stretches (helical) occupy residues 175–195 and 200–220; these read TFFAPVIGFYLPAAIPWYFWG and TAFFVATMLRYCACTNITFLV. 4 residues coordinate Fe cation: His-225, His-254, His-257, and His-258. Positions 254–258 match the Histidine box-3 motif; sequence HNYHH.

Belongs to the fatty acid desaturase type 1 family. Fe(2+) serves as cofactor.

The protein localises to the membrane. It carries out the reaction (9Z)-octadecenoyl-CoA + 2 Fe(II)-[cytochrome b5] + O2 + 2 H(+) = (9Z,12Z)-octadecadienoyl-CoA + 2 Fe(III)-[cytochrome b5] + 2 H2O. The catalysed reaction is (9Z)-hexadecenoyl-CoA + 2 Fe(II)-[cytochrome b5] + O2 + 2 H(+) = (9Z,12Z)-hexadecadienoyl-CoA + 2 Fe(III)-[cytochrome b5] + 2 H2O. Its function is as follows. Catalyzes the formation of a Delta12 double bond, acting on monounsaturated fatty acyl substrates like palmitoleoyl-CoA ((9Z)-hexadecenoyl-CoA) and oleoyl-CoA ((9Z)-octadecenoyl-CoA) with higher desaturation activity on (9Z)-octadecenoyl-CoA than (9Z)-hexadecenoyl-CoA. Requires preexisting cis double bond at the Delta9 position of fatty acyls to be able to insert the Delta12 double bond. Delta12-desaturation of (9Z)-octadecenoyl-CoA in insects produces (9Z,12Z)-octadecadienoyl-CoA (linoleoyl-CoA) which may be used to supply precursors of crucial mediators of immunity and reproduction and other essential functions. This Tribolium castaneum (Red flour beetle) protein is Acyl-CoA Delta-12 desaturase.